We begin with the raw amino-acid sequence, 220 residues long: Grancalcin (220 aa).

4 EF-hand domains span residues 51 to 86, 92 to 127, 122 to 157, and 158 to 193; these read SPAD…SGIS, FSLE…LNAW, AALN…MGYR, and LSPQ…ALTD. Ca(2+) is bound by residues D105, D107, T109, K111, E116, D135, D137, S139, T141, and E146.

Homodimer. Interacts with SRI and LCP1.

The protein resides in the cytoplasm. The protein localises to the cytoplasmic granule membrane. Its function is as follows. Calcium-binding protein that may play a role in the adhesion of neutrophils to fibronectin. May play a role in the formation of focal adhesions. The sequence is that of Grancalcin (Gca) from Mus musculus (Mouse).